Reading from the N-terminus, the 237-residue chain is 2-C-methyl-D-erythritol 4-phosphate cytidylyltransferase (237 aa).

The protein belongs to the IspD/TarI cytidylyltransferase family. IspD subfamily. As to quaternary structure, homodimer.

The catalysed reaction is 2-C-methyl-D-erythritol 4-phosphate + CTP + H(+) = 4-CDP-2-C-methyl-D-erythritol + diphosphate. It participates in isoprenoid biosynthesis; isopentenyl diphosphate biosynthesis via DXP pathway; isopentenyl diphosphate from 1-deoxy-D-xylulose 5-phosphate: step 2/6. Catalyzes the formation of 4-diphosphocytidyl-2-C-methyl-D-erythritol from CTP and 2-C-methyl-D-erythritol 4-phosphate (MEP). This chain is 2-C-methyl-D-erythritol 4-phosphate cytidylyltransferase, found in Pectobacterium atrosepticum (strain SCRI 1043 / ATCC BAA-672) (Erwinia carotovora subsp. atroseptica).